The chain runs to 314 residues: uncharacterized protein (314 aa).

To M.leprae ML0607.

This is an uncharacterized protein from Mycobacterium bovis (strain ATCC BAA-935 / AF2122/97).